A 530-amino-acid polypeptide reads, in one-letter code: Na(+)/H(+) antiporter NhaB (530 aa).

11 consecutive transmembrane segments (helical) span residues 23-43, 45-65, 90-110, 113-133, 140-160, 205-225, 238-258, 308-328, 351-371, 451-471, and 479-499; these read VAII…NPFL, GWLL…CYPL, LVAN…IYFM, LLLF…LLSI, AFLS…SVAV, LLMH…VGEP, FGEF…AGML, IAVW…LIGL, EEAL…AVII, ATPN…APLI, and VIMA…GIMF.

Belongs to the NhaB Na(+)/H(+) (TC 2.A.34) antiporter family.

The protein resides in the cell inner membrane. The catalysed reaction is 2 Na(+)(in) + 3 H(+)(out) = 2 Na(+)(out) + 3 H(+)(in). Functionally, na(+)/H(+) antiporter that extrudes sodium in exchange for external protons. This is Na(+)/H(+) antiporter NhaB from Vibrio cholerae serotype O1 (strain ATCC 39541 / Classical Ogawa 395 / O395).